The sequence spans 299 residues: ATP phosphoribosyltransferase (299 aa).

Belongs to the ATP phosphoribosyltransferase family. Long subfamily. As to quaternary structure, equilibrium between an active dimeric form, an inactive hexameric form and higher aggregates. Interconversion between the various forms is largely reversible and is influenced by the natural substrates and inhibitors of the enzyme. It depends on Mg(2+) as a cofactor.

It localises to the cytoplasm. It catalyses the reaction 1-(5-phospho-beta-D-ribosyl)-ATP + diphosphate = 5-phospho-alpha-D-ribose 1-diphosphate + ATP. The protein operates within amino-acid biosynthesis; L-histidine biosynthesis; L-histidine from 5-phospho-alpha-D-ribose 1-diphosphate: step 1/9. Feedback inhibited by histidine. Catalyzes the condensation of ATP and 5-phosphoribose 1-diphosphate to form N'-(5'-phosphoribosyl)-ATP (PR-ATP). Has a crucial role in the pathway because the rate of histidine biosynthesis seems to be controlled primarily by regulation of HisG enzymatic activity. The protein is ATP phosphoribosyltransferase of Pectobacterium carotovorum subsp. carotovorum (strain PC1).